The chain runs to 385 residues: 6-hydroxynicotinate 3-monooxygenase (385 aa).

The signal sequence occupies residues 1 to 20; that stretch reads MSQSPRIAVVGAGLGGAAAA. Residues Gly15, 34–35, His47, Arg108, and Leu130 each bind FAD; that span reads EQ. The active-site Proton acceptor is His47. Catalysis depends on Tyr215, which acts as the Proton acceptor. FAD-binding positions include Asp294 and 307-308; that span reads AA.

The protein belongs to the 6-hydroxynicotinate 3-monooxygenase family. Monomer. FAD is required as a cofactor.

It carries out the reaction 6-hydroxynicotinate + NADH + O2 + 2 H(+) = 2,5-dihydroxypyridine + CO2 + NAD(+) + H2O. Inhibited competitively by nicotinic acid with a Ki of 0.49 mM. Inhibited by thiol-specific compounds p-chloromercuribenzoate, DTNB, Ag(2)SO(4), HgCl(2), CuCl(2) and N-ethylmaleimide. No inhibition by o-phenanthroline, 8-hydroxyquinoline, EDTA, disodium 4,5-dihydroxy-m-benzenedisulfonate, fluoride, azide, KCl, LiCl, NaCl, BaCl(2), MnCl(2), MgCl(2), PBCl, ZnCl(2), CoCl(2), SnCl(2), FeSO(4), FeCl(3), NiCl(2), CdCl(2), AlCl(3), iodoacetic acid, hydro-xylamine, phenylhydrazine, semicarbazide, cysteamine, alpha,alpha-dipyridyl and urea. Functionally, flavin-dependent monooxygenase (FMO) that catalyzes the decarboxylative hydroxylation of 6-hydroxynicotinic acid (6-HNA) to 2,5-dihydroxypyridine (2,5-DHP) with concomitant oxidation of NADH, a step in the aerobic nicotinate degradation pathway. Uses NADH in preference to NADPH as an electron donor. The chain is 6-hydroxynicotinate 3-monooxygenase (nicC) from Pseudomonas fluorescens.